Reading from the N-terminus, the 634-residue chain is Protein IcfG (634 aa).

The HAMP domain maps to 306–361 (HHSTVPILDLTKASQAIAAGDLDYEININQGNRQDEIGILGNSFIYMKNQIKTLIA). The 249-residue stretch at 385 to 633 (PISLPDLQQW…DDITMIAVYR (249 aa)) folds into the PPM-type phosphatase domain.

Its function is as follows. Involved in cross-regulation of inorganic carbon and glucose metabolisms. The protein is Protein IcfG (icfG) of Synechocystis sp. (strain ATCC 27184 / PCC 6803 / Kazusa).